The sequence spans 1296 residues: Phosphoribosylformylglycinamidine synthase (1296 aa).

A disordered region spans residues 304-323; sequence WPGAATGSGGEIRDEGATGR. ATP is bound by residues 306–317 and Ala677; that span reads GAATGSGGEIRD. Residues Asp678, Glu717, Asn721, and Asp885 each coordinate Mg(2+). Ser887 is an ATP binding site. Residues 1000-1013 show a composition bias toward basic and acidic residues; sequence PDCADQEHQAKQDE. The tract at residues 1000-1019 is disordered; that stretch reads PDCADQEHQAKQDESDPGLN. Positions 1043–1296 constitute a Glutamine amidotransferase type-1 domain; the sequence is VAVLREQGVN…MFRNARKQLG (254 aa). Residue Cys1136 is the Nucleophile of the active site. Residues His1261 and Glu1263 contribute to the active site.

The protein in the N-terminal section; belongs to the FGAMS family. Monomer.

Its subcellular location is the cytoplasm. The catalysed reaction is N(2)-formyl-N(1)-(5-phospho-beta-D-ribosyl)glycinamide + L-glutamine + ATP + H2O = 2-formamido-N(1)-(5-O-phospho-beta-D-ribosyl)acetamidine + L-glutamate + ADP + phosphate + H(+). Its pathway is purine metabolism; IMP biosynthesis via de novo pathway; 5-amino-1-(5-phospho-D-ribosyl)imidazole from N(2)-formyl-N(1)-(5-phospho-D-ribosyl)glycinamide: step 1/2. Functionally, phosphoribosylformylglycinamidine synthase involved in the purines biosynthetic pathway. Catalyzes the ATP-dependent conversion of formylglycinamide ribonucleotide (FGAR) and glutamine to yield formylglycinamidine ribonucleotide (FGAM) and glutamate. The sequence is that of Phosphoribosylformylglycinamidine synthase from Yersinia pestis bv. Antiqua (strain Antiqua).